The chain runs to 477 residues: Glycogen synthase (477 aa).

Lys-15 is an ADP-alpha-D-glucose binding site.

This sequence belongs to the glycosyltransferase 1 family. Bacterial/plant glycogen synthase subfamily.

It carries out the reaction [(1-&gt;4)-alpha-D-glucosyl](n) + ADP-alpha-D-glucose = [(1-&gt;4)-alpha-D-glucosyl](n+1) + ADP + H(+). It functions in the pathway glycan biosynthesis; glycogen biosynthesis. Synthesizes alpha-1,4-glucan chains using ADP-glucose. This chain is Glycogen synthase, found in Anaeromyxobacter dehalogenans (strain 2CP-1 / ATCC BAA-258).